A 253-amino-acid chain; its full sequence is Hydroxyacylglutathione hydrolase (253 aa).

Positions 54, 56, 58, 59, 112, 131, and 169 each coordinate Zn(2+).

The protein belongs to the metallo-beta-lactamase superfamily. Glyoxalase II family. As to quaternary structure, monomer. Requires Zn(2+) as cofactor.

It carries out the reaction an S-(2-hydroxyacyl)glutathione + H2O = a 2-hydroxy carboxylate + glutathione + H(+). It participates in secondary metabolite metabolism; methylglyoxal degradation; (R)-lactate from methylglyoxal: step 2/2. Functionally, thiolesterase that catalyzes the hydrolysis of S-D-lactoyl-glutathione to form glutathione and D-lactic acid. The polypeptide is Hydroxyacylglutathione hydrolase (Bartonella quintana (strain Toulouse) (Rochalimaea quintana)).